The following is a 158-amino-acid chain: Large ribosomal subunit protein uL13 (158 aa).

Belongs to the universal ribosomal protein uL13 family. In terms of assembly, part of the 50S ribosomal subunit.

This protein is one of the early assembly proteins of the 50S ribosomal subunit, although it is not seen to bind rRNA by itself. It is important during the early stages of 50S assembly. The chain is Large ribosomal subunit protein uL13 from Rickettsia canadensis (strain McKiel).